A 358-amino-acid polypeptide reads, in one-letter code: Protein FAM50 homolog (358 aa).

Basic and acidic residues predominate over residues 104–113 (AKLAEKDRQK). A disordered region spans residues 104–151 (AKLAEKDRQKRQIQALSFDPDDEPDGDDANDGDEGSGKESEKEDVKEE). Residues 122–137 (DPDDEPDGDDANDGDE) show a composition bias toward acidic residues. Over residues 138-151 (GSGKESEKEDVKEE) the composition is skewed to basic and acidic residues.

The protein belongs to the FAM50 family.

This is Protein FAM50 homolog from Anopheles gambiae (African malaria mosquito).